Consider the following 79-residue polypeptide: Small ribosomal subunit protein uS17 (79 aa).

Belongs to the universal ribosomal protein uS17 family. As to quaternary structure, part of the 30S ribosomal subunit.

One of the primary rRNA binding proteins, it binds specifically to the 5'-end of 16S ribosomal RNA. The chain is Small ribosomal subunit protein uS17 from Rhizobium etli (strain CIAT 652).